The sequence spans 170 residues: Crossover junction endodeoxyribonuclease RuvC (170 aa).

Active-site residues include D9, E70, and D145. 3 residues coordinate Mg(2+): D9, E70, and D145.

The protein belongs to the RuvC family. Homodimer which binds Holliday junction (HJ) DNA. The HJ becomes 2-fold symmetrical on binding to RuvC with unstacked arms; it has a different conformation from HJ DNA in complex with RuvA. In the full resolvosome a probable DNA-RuvA(4)-RuvB(12)-RuvC(2) complex forms which resolves the HJ. Mg(2+) serves as cofactor.

It localises to the cytoplasm. It carries out the reaction Endonucleolytic cleavage at a junction such as a reciprocal single-stranded crossover between two homologous DNA duplexes (Holliday junction).. In terms of biological role, the RuvA-RuvB-RuvC complex processes Holliday junction (HJ) DNA during genetic recombination and DNA repair. Endonuclease that resolves HJ intermediates. Cleaves cruciform DNA by making single-stranded nicks across the HJ at symmetrical positions within the homologous arms, yielding a 5'-phosphate and a 3'-hydroxyl group; requires a central core of homology in the junction. The consensus cleavage sequence is 5'-(A/T)TT(C/G)-3'. Cleavage occurs on the 3'-side of the TT dinucleotide at the point of strand exchange. HJ branch migration catalyzed by RuvA-RuvB allows RuvC to scan DNA until it finds its consensus sequence, where it cleaves and resolves the cruciform DNA. In Chlamydia trachomatis serovar L2 (strain ATCC VR-902B / DSM 19102 / 434/Bu), this protein is Crossover junction endodeoxyribonuclease RuvC.